The chain runs to 143 residues: Transcriptional regulatory protein RosR (143 aa).

The C2H3-type zinc-finger motif lies at 79–97 (CLECGGNFKSLKRHLMTHH).

The protein belongs to the ros/MucR family.

The polypeptide is Transcriptional regulatory protein RosR (rosR) (Rhizobium etli (strain ATCC 51251 / DSM 11541 / JCM 21823 / NBRC 15573 / CFN 42)).